A 715-amino-acid polypeptide reads, in one-letter code: Polyribonucleotide nucleotidyltransferase (715 aa).

Residues Asp-493 and Asp-499 each contribute to the Mg(2+) site. A KH domain is found at Pro-560 to Ile-619. One can recognise an S1 motif domain in the interval Gly-629–Lys-697.

Belongs to the polyribonucleotide nucleotidyltransferase family. Mg(2+) serves as cofactor.

It localises to the cytoplasm. It carries out the reaction RNA(n+1) + phosphate = RNA(n) + a ribonucleoside 5'-diphosphate. Functionally, involved in mRNA degradation. Catalyzes the phosphorolysis of single-stranded polyribonucleotides processively in the 3'- to 5'-direction. This Burkholderia orbicola (strain MC0-3) protein is Polyribonucleotide nucleotidyltransferase.